A 559-amino-acid polypeptide reads, in one-letter code: Probable alpha-(1-&gt;6)-mannopyranosyltransferase MSMEG_3120/MSMEI_3041 (559 aa).

The next 12 membrane-spanning stretches (helical) occupy residues 41-61 (FGAT…ARPV), 81-101 (VSLT…LMLG), 202-222 (IVEA…LIVW), 247-267 (LLFM…GLML), 300-316 (WQPM…IAMS), 321-340 (LPSL…RWGG), 355-375 (ISLA…GWLF), 386-406 (WMSP…LLGL), 419-439 (AIGV…VLRG), 455-475 (VLLF…PLAA), 480-500 (PGFR…GPTA), and 507-527 (LFQI…LIAL). Over residues 535-548 (RPAPEPPARPPEQP) the composition is skewed to pro residues. The segment at 535-559 (RPAPEPPARPPEQPAPADDAYAESP) is disordered.

Belongs to the MptA/B family.

It is found in the membrane. In terms of biological role, catalyzes the addition of alpha-(1-&gt;6)-mannose residue. This chain is Probable alpha-(1-&gt;6)-mannopyranosyltransferase MSMEG_3120/MSMEI_3041, found in Mycolicibacterium smegmatis (strain ATCC 700084 / mc(2)155) (Mycobacterium smegmatis).